Reading from the N-terminus, the 133-residue chain is Large ribosomal subunit protein bL20 (133 aa).

It belongs to the bacterial ribosomal protein bL20 family.

Binds directly to 23S ribosomal RNA and is necessary for the in vitro assembly process of the 50S ribosomal subunit. It is not involved in the protein synthesizing functions of that subunit. The protein is Large ribosomal subunit protein bL20 of Chelativorans sp. (strain BNC1).